A 231-amino-acid chain; its full sequence is Probable calcium-binding protein CML21 (231 aa).

4 EF-hand domains span residues 54-89 (DGLR…LEIS), 90-125 (FDEE…VYLL), 145-180 (PTFE…SGER), and 181-216 (SSGR…WVGI). Residues Asp67, Asp69, Asn71, Ser73, and Glu78 each contribute to the Ca(2+) site. Ca(2+)-binding residues include Asp158, Asn160, Asp162, Tyr164, Glu169, Asp194, Asp196, Asn198, Met200, and Glu205.

Functionally, potential calcium sensor. The sequence is that of Probable calcium-binding protein CML21 (CML21) from Arabidopsis thaliana (Mouse-ear cress).